The primary structure comprises 404 residues: Formate-dependent phosphoribosylglycinamide formyltransferase (404 aa).

Residues 27 to 28 (EL) and Glu87 contribute to the N(1)-(5-phospho-beta-D-ribosyl)glycinamide site. ATP is bound by residues Arg120, Lys162, 167–172 (SSGKGQ), 202–205 (EGFI), and Glu210. An ATP-grasp domain is found at 125–320 (RLAAETLGLP…EFELHARALL (196 aa)). Glu279 and Glu291 together coordinate Mg(2+). N(1)-(5-phospho-beta-D-ribosyl)glycinamide is bound by residues Asp298, Lys367, and 374 to 375 (RR).

The protein belongs to the PurK/PurT family. In terms of assembly, homodimer.

It carries out the reaction N(1)-(5-phospho-beta-D-ribosyl)glycinamide + formate + ATP = N(2)-formyl-N(1)-(5-phospho-beta-D-ribosyl)glycinamide + ADP + phosphate + H(+). The protein operates within purine metabolism; IMP biosynthesis via de novo pathway; N(2)-formyl-N(1)-(5-phospho-D-ribosyl)glycinamide from N(1)-(5-phospho-D-ribosyl)glycinamide (formate route): step 1/1. Functionally, involved in the de novo purine biosynthesis. Catalyzes the transfer of formate to 5-phospho-ribosyl-glycinamide (GAR), producing 5-phospho-ribosyl-N-formylglycinamide (FGAR). Formate is provided by PurU via hydrolysis of 10-formyl-tetrahydrofolate. This Bordetella pertussis (strain Tohama I / ATCC BAA-589 / NCTC 13251) protein is Formate-dependent phosphoribosylglycinamide formyltransferase.